A 577-amino-acid polypeptide reads, in one-letter code: Arginine--tRNA ligase (577 aa).

The 'HIGH' region motif lies at 122 to 132; it reads PNVAKEMHVGH.

Belongs to the class-I aminoacyl-tRNA synthetase family. As to quaternary structure, monomer.

It is found in the cytoplasm. The enzyme catalyses tRNA(Arg) + L-arginine + ATP = L-arginyl-tRNA(Arg) + AMP + diphosphate. This is Arginine--tRNA ligase from Enterobacter sp. (strain 638).